We begin with the raw amino-acid sequence, 112 residues long: uncharacterized protein (112 aa).

The next 2 helical transmembrane spans lie at 44-63 and 68-90; these read VITG…LHSL and LAAL…KLVH.

It is found in the cell membrane. This is an uncharacterized protein from Archaeoglobus fulgidus (strain ATCC 49558 / DSM 4304 / JCM 9628 / NBRC 100126 / VC-16).